The primary structure comprises 261 residues: Nickel import ATP-binding protein NikD (261 aa).

The ABC transporter domain occupies 6–248; sequence LRIEGLTIAT…PRHDATRALV (243 aa). ATP is bound at residue 41–48; the sequence is GASGSGKS.

It belongs to the ABC transporter superfamily. Nickel importer (TC 3.A.1.5.3) family. The complex is composed of two ATP-binding proteins (NikD and NikE), two transmembrane proteins (NikB and NikC) and a solute-binding protein (NikA).

It localises to the cell inner membrane. The catalysed reaction is Ni(2+)(out) + ATP + H2O = Ni(2+)(in) + ADP + phosphate + H(+). Part of the ABC transporter complex NikABCDE involved in nickel import. Responsible for energy coupling to the transport system. The sequence is that of Nickel import ATP-binding protein NikD from Rhodospirillum rubrum (strain ATCC 11170 / ATH 1.1.1 / DSM 467 / LMG 4362 / NCIMB 8255 / S1).